Reading from the N-terminus, the 375-residue chain is Growth/differentiation factor 8 (375 aa).

The signal sequence occupies residues 1 to 18 (MQKLQISVYIYLFMLIVA). Residues 19–266 (GPVDLNENSE…VTDTPKRSRR (248 aa)) constitute a propeptide that is removed on maturation. 2 N-linked (GlcNAc...) asparagine glycosylation sites follow: asparagine 47 and asparagine 71. Cystine bridges form between cysteine 272-cysteine 282, cysteine 281-cysteine 340, cysteine 309-cysteine 372, and cysteine 313-cysteine 374.

This sequence belongs to the TGF-beta family. As to quaternary structure, homodimer; disulfide-linked. Interacts with WFIKKN2, leading to inhibit its activity. Interacts with FSTL3. Post-translationally, synthesized as large precursor molecule that undergoes proteolytic cleavage to generate an N-terminal propeptide and a disulfide linked C-terminal dimer, which is the biologically active molecule. The circulating form consists of a latent complex of the C-terminal dimer and other proteins, including its propeptide, which maintain the C-terminal dimer in a latent, inactive state. Ligand activation requires additional cleavage of the prodomain by a tolloid-like metalloproteinase.

Its subcellular location is the secreted. Its function is as follows. Acts specifically as a negative regulator of skeletal muscle growth. The protein is Growth/differentiation factor 8 (MSTN) of Bubalus bubalis (Domestic water buffalo).